A 254-amino-acid polypeptide reads, in one-letter code: Phosphomannomutase (254 aa).

D19 (nucleophile) is an active-site residue. Residues D19 and D21 each contribute to the Mg(2+) site. D21 acts as the Proton donor/acceptor in catalysis. Alpha-D-mannose 1-phosphate is bound by residues R28, R130, R141, R148, S186, and D188. Mg(2+)-binding residues include D216, F228, D230, and T233. S240 is subject to Phosphoserine.

This sequence belongs to the eukaryotic PMM family. Homodimer.

It localises to the cytoplasm. The catalysed reaction is alpha-D-mannose 1-phosphate = D-mannose 6-phosphate. It participates in nucleotide-sugar biosynthesis; GDP-alpha-D-mannose biosynthesis; alpha-D-mannose 1-phosphate from D-fructose 6-phosphate: step 2/2. In terms of biological role, involved in the synthesis of the GDP-mannose and dolichol-phosphate-mannose required for a number of critical mannosyl transfer reactions such as folding and glycosylation of secretory proteins in the ER lumen. The sequence is that of Phosphomannomutase from Saccharomyces cerevisiae (strain ATCC 204508 / S288c) (Baker's yeast).